A 346-amino-acid polypeptide reads, in one-letter code: GTP 3',8-cyclase (346 aa).

Residues 10-240 enclose the Radical SAM core domain; that stretch reads QRSRPLRVLR…VTRIRARWPL (231 aa). Residue Arg-19 coordinates GTP. [4Fe-4S] cluster is bound by residues Cys-26 and Cys-30. Residue Tyr-32 coordinates S-adenosyl-L-methionine. Position 33 (Cys-33) interacts with [4Fe-4S] cluster. Position 65 (Arg-65) interacts with GTP. Gly-69 is an S-adenosyl-L-methionine binding site. Residue Thr-104 coordinates GTP. Ser-129 provides a ligand contact to S-adenosyl-L-methionine. Lys-177 serves as a coordination point for GTP. Met-211 provides a ligand contact to S-adenosyl-L-methionine. [4Fe-4S] cluster-binding residues include Cys-274 and Cys-277. 279–281 contacts GTP; sequence RLR. Position 291 (Cys-291) interacts with [4Fe-4S] cluster. Residues 326-346 form a disordered region; the sequence is SDERQQTTGSMPHAEMAYLGG.

Belongs to the radical SAM superfamily. MoaA family. Monomer and homodimer. The cofactor is [4Fe-4S] cluster.

It catalyses the reaction GTP + AH2 + S-adenosyl-L-methionine = (8S)-3',8-cyclo-7,8-dihydroguanosine 5'-triphosphate + 5'-deoxyadenosine + L-methionine + A + H(+). The protein operates within cofactor biosynthesis; molybdopterin biosynthesis. In terms of biological role, catalyzes the cyclization of GTP to (8S)-3',8-cyclo-7,8-dihydroguanosine 5'-triphosphate. The protein is GTP 3',8-cyclase of Parasynechococcus marenigrum (strain WH8102).